We begin with the raw amino-acid sequence, 261 residues long: tRNA pseudouridine synthase A (261 aa).

The active-site Nucleophile is the D51. Y109 lines the substrate pocket.

It belongs to the tRNA pseudouridine synthase TruA family. As to quaternary structure, homodimer.

It carries out the reaction uridine(38/39/40) in tRNA = pseudouridine(38/39/40) in tRNA. Functionally, formation of pseudouridine at positions 38, 39 and 40 in the anticodon stem and loop of transfer RNAs. The chain is tRNA pseudouridine synthase A from Shewanella baltica (strain OS155 / ATCC BAA-1091).